The sequence spans 503 residues: Protein DETOXIFICATION 36 (503 aa).

12 consecutive transmembrane segments (helical) span residues 54-74 (LFHLAAPAIFVYVINNGMSML), 87-107 (LAAASLGNSGFNMFTLGLMLG), 137-157 (IVLVITGLPMTLLFIFSKPLL), 166-186 (VASVASVFVYGMIPMIFAYAV), 203-223 (SAYISAATLVIHLILSWLSVF), 225-245 (FGWGLLGLSVVHSLSWWIIVL), 271-293 (GLWDFFQLSAASAVMLCLESWYS), 313-333 (LAICMSISAMSFMVSVGFNAA), 355-375 (AVTTGVSFLLSLFEAIVILSW), 399-419 (FLAITIVLNGVQPVLSGVAVG), 427-447 (AYVNIGCYYIVGIPIGYVLGF), and 456-476 (IWTGMIGGTLMQTIILVIVTF).

This sequence belongs to the multi antimicrobial extrusion (MATE) (TC 2.A.66.1) family.

The protein resides in the membrane. The protein is Protein DETOXIFICATION 36 of Arabidopsis thaliana (Mouse-ear cress).